Reading from the N-terminus, the 256-residue chain is Pimeloyl-[acyl-carrier protein] methyl ester esterase (256 aa).

The AB hydrolase-1 domain maps to 15–242; the sequence is HLVLLHGWGL…AAHAPFISHP (228 aa). Substrate contacts are provided by residues W22, 82–83, and 143–147; these read SL and FLALQ. S82 (nucleophile) is an active-site residue. Residues D207 and H235 contribute to the active site. Position 235 (H235) interacts with substrate.

This sequence belongs to the AB hydrolase superfamily. Carboxylesterase BioH family. As to quaternary structure, monomer.

The protein localises to the cytoplasm. The enzyme catalyses 6-carboxyhexanoyl-[ACP] methyl ester + H2O = 6-carboxyhexanoyl-[ACP] + methanol + H(+). It participates in cofactor biosynthesis; biotin biosynthesis. In terms of biological role, the physiological role of BioH is to remove the methyl group introduced by BioC when the pimeloyl moiety is complete. It allows to synthesize pimeloyl-ACP via the fatty acid synthetic pathway through the hydrolysis of the ester bonds of pimeloyl-ACP esters. The polypeptide is Pimeloyl-[acyl-carrier protein] methyl ester esterase (Escherichia coli O17:K52:H18 (strain UMN026 / ExPEC)).